The sequence spans 82 residues: Translation initiation factor IF-1, chloroplastic (82 aa).

The region spanning 1-72 (MNKQNLIDVE…TKGRIIYRLR (72 aa)) is the S1-like domain.

It belongs to the IF-1 family. In terms of assembly, component of the 30S ribosomal translation pre-initiation complex which assembles on the 30S ribosome in the order IF-2 and IF-3, IF-1 and N-formylmethionyl-tRNA(fMet); mRNA recruitment can occur at any time during PIC assembly.

Its subcellular location is the plastid. It localises to the chloroplast. In terms of biological role, one of the essential components for the initiation of protein synthesis. Stabilizes the binding of IF-2 and IF-3 on the 30S subunit to which N-formylmethionyl-tRNA(fMet) subsequently binds. Helps modulate mRNA selection, yielding the 30S pre-initiation complex (PIC). Upon addition of the 50S ribosomal subunit IF-1, IF-2 and IF-3 are released leaving the mature 70S translation initiation complex. This chain is Translation initiation factor IF-1, chloroplastic, found in Cycas taitungensis (Prince sago).